We begin with the raw amino-acid sequence, 290 residues long: NAD kinase (290 aa).

Aspartate 75 serves as the catalytic Proton acceptor. NAD(+) contacts are provided by residues 75–76, 148–149, aspartate 178, 189–194, and glutamine 247; these read DG, NE, and TAYNIS.

It belongs to the NAD kinase family. A divalent metal cation is required as a cofactor.

The protein resides in the cytoplasm. It catalyses the reaction NAD(+) + ATP = ADP + NADP(+) + H(+). In terms of biological role, involved in the regulation of the intracellular balance of NAD and NADP, and is a key enzyme in the biosynthesis of NADP. Catalyzes specifically the phosphorylation on 2'-hydroxyl of the adenosine moiety of NAD to yield NADP. The chain is NAD kinase from Wolinella succinogenes (strain ATCC 29543 / DSM 1740 / CCUG 13145 / JCM 31913 / LMG 7466 / NCTC 11488 / FDC 602W) (Vibrio succinogenes).